The sequence spans 428 residues: Kynureninase (428 aa).

Residues T104, T105, 132-135 (FPSD), D213, H216, and Y238 each bind pyridoxal 5'-phosphate. At K239 the chain carries N6-(pyridoxal phosphate)lysine. The pyridoxal 5'-phosphate site is built by W267 and T295.

Belongs to the kynureninase family. As to quaternary structure, homodimer. Pyridoxal 5'-phosphate is required as a cofactor.

The catalysed reaction is L-kynurenine + H2O = anthranilate + L-alanine + H(+). It carries out the reaction 3-hydroxy-L-kynurenine + H2O = 3-hydroxyanthranilate + L-alanine + H(+). It participates in amino-acid degradation; L-kynurenine degradation; L-alanine and anthranilate from L-kynurenine: step 1/1. The protein operates within cofactor biosynthesis; NAD(+) biosynthesis; quinolinate from L-kynurenine: step 2/3. Catalyzes the cleavage of L-kynurenine (L-Kyn) and L-3-hydroxykynurenine (L-3OHKyn) into anthranilic acid (AA) and 3-hydroxyanthranilic acid (3-OHAA), respectively. This Geobacillus thermodenitrificans (strain NG80-2) protein is Kynureninase.